A 755-amino-acid chain; its full sequence is MADSSSSLPPLCEKISYKNYFLRVVDLTILGFLFSLLLYRILLMNQNNSVWVVAFLCESFFSFIWLLITSIKWSPASYKSYPERLDERVHDLPSVDMFVTTADPVREPPILVANTLLSLLAVNYPANKLACYVSDDGCSPLTYFSLKEASKFAKIWVPFCKKYNIKVRAPFRYFLNPPAATESSEFSKDWEITKREYEKLSRRVEDATGDSHWLDAEDDFEDFSNTKPNDHSTIVKVVWENKGGVGVENEVPHFVYISREKRPNYLHHYKAGAMNFLVRVSGLMTNAPYMLNVDCDMYANEADVVRQAMCIFLQKSMNSNHCAFVQFPQEFYDSNADELTVLQSYLGRGIAGIQGPTYAGSGCFHTRRVMYGLSIDDLEDDGSLSSLATRKYLAEENLAREFGNSNEMVTSVVEALQRKPNPQNTLANSLEAAQEVGHCHFEYQTSWGKTIGWLYESTAEDANTSIGIHSRGWTSSYISPKPPAFLGAMPPGGPEAMLQQRRWATGLLEVLFNKQSPLIGMFCRKIRFRQSLAYLYIFTWGLRSIPELIYCLLPAYCLLHNAALFPKGVYLGIVVTLVGMHCLYSLWEFMSLGFSVQSWFASQSFWRIKTTCSWLFSIPDIILKLLGISKTVFIVTKKTMPKTMSGSGSEKSQREVDCPNQDSGKFEFDGSLYFLPGTFILLVNLAALAGCSVGLQRHRGGGSGLAEACGCILVVILFLPFLKGMFEKGKYGIPWSTLSKAAFLAVLFVVFSVGN.

The next 2 membrane-spanning stretches (helical) occupy residues 24–44 and 51–71; these read VVDLTILGFLFSLLLYRILLM and WVVAFLCESFFSFIWLLITSI. Residues D136 and D461 contribute to the active site. Transmembrane regions (helical) follow at residues 534–556, 569–589, 615–635, 674–694, 702–722, and 733–753; these read YLYIFTWGLRSIPELIYCLLPAY, VYLGIVVTLVGMHCLYSLWEF, LFSIPDIILKLLGISKTVFIV, FLPGTFILLVNLAALAGCSVG, GSGLAEACGCILVVILFLPFL, and IPWSTLSKAAFLAVLFVVFSV.

This sequence belongs to the glycosyltransferase 2 family. Plant cellulose synthase-like B subfamily. As to expression, expressed in young seedlings, primarily in the vascular tissue.

The protein resides in the golgi apparatus membrane. Its function is as follows. Thought to be a Golgi-localized beta-glycan synthase that polymerize the backbones of noncellulosic polysaccharides (hemicelluloses) of plant cell wall. The sequence is that of Cellulose synthase-like protein B3 (CSLB3) from Arabidopsis thaliana (Mouse-ear cress).